The sequence spans 233 residues: Delta-actitoxin-Amc1a (233 aa).

A signal peptide spans 1–18; the sequence is MKRIFIVALLFATCLVNA. 2 propeptides span residues 19 to 29 and 30 to 33; these read KPSINDADIKR and EPEP. Pro-39 is modified (hydroxyproline). 2 disulfides stabilise this stretch: Cys-40–Cys-51 and Cys-43–Cys-58. 2 consecutive propeptides follow at residues 61 to 63 and 64 to 67; these read RKR and EPEP. Pro-73 is modified (hydroxyproline). 2 disulfides stabilise this stretch: Cys-74/Cys-85 and Cys-77/Cys-92. 2 consecutive propeptides follow at residues 95 to 97 and 98 to 101; these read RKR and EPEP. Pro-107 is subject to Hydroxyproline. 2 disulfide bridges follow: Cys-108/Cys-119 and Cys-111/Cys-126. 2 propeptides span residues 129–131 and 132–135; these read RKR and EPEP. Pro-141 is modified (hydroxyproline). Intrachain disulfides connect Cys-142/Cys-153 and Cys-145/Cys-160. 2 propeptides span residues 163-165 and 166-169; these read RKR and EPEP. Pro-175 carries the post-translational modification Hydroxyproline. Cystine bridges form between Cys-176–Cys-187 and Cys-179–Cys-194. 2 consecutive propeptides follow at residues 197–199 and 200–203; these read RKR and EPEP. Pro-209 carries the hydroxyproline modification. Cystine bridges form between Cys-210–Cys-221 and Cys-213–Cys-228. Positions 231 to 233 are excised as a propeptide; sequence RKR.

Belongs to the sea anemone BBH family. In terms of processing, each Am I peptide may contain 2 disulfide bonds. Post-translationally, the precursor protein seems to be processed in the following sequence: release of the signal peptide and of the propeptide, production of six identical 34-residue peptides by cleavage between Arg and Glu, release of four N-terminal and three C-terminal residues from each peptide and hydroxylation of each Pro in position 6 of the resulting 27-residue peptides.

The protein localises to the secreted. Its subcellular location is the nematocyst. Its function is as follows. May inhibit voltage-gated sodium channels (Nav). This Antheopsis maculata (Sea anemone) protein is Delta-actitoxin-Amc1a.